The primary structure comprises 492 residues: Argininosuccinate lyase (492 aa).

Belongs to the lyase 1 family. Argininosuccinate lyase subfamily.

It localises to the cytoplasm. The catalysed reaction is 2-(N(omega)-L-arginino)succinate = fumarate + L-arginine. The protein operates within amino-acid biosynthesis; L-arginine biosynthesis; L-arginine from L-ornithine and carbamoyl phosphate: step 3/3. In Methanoculleus marisnigri (strain ATCC 35101 / DSM 1498 / JR1), this protein is Argininosuccinate lyase.